A 406-amino-acid polypeptide reads, in one-letter code: LIM/homeobox protein Lhx1 (406 aa).

2 consecutive LIM zinc-binding domains span residues Cys4 to Asp54 and Cys63 to Asp117. 2 disordered regions span residues Asn128–Ile187 and Tyr293–Gly374. A compositionally biased stretch (low complexity) spans Ser137–Pro148. A compositionally biased stretch (basic and acidic residues) spans Asp151–Gly167. Residue Ser162 is modified to Phosphoserine. Residues Arg180–Lys239 constitute a DNA-binding region (homeobox). Over residues Pro315 to Leu327 the composition is skewed to low complexity. The segment covering Gly352–Pro362 has biased composition (pro residues).

In terms of assembly, interacts with LDB1 via the tandem LIM domains. Expressed in the brain, thymus, and tonsils. Expressed in samples from patients with chronic myeloid leukemia (CML) and in 58% of acute myeloid leukemia (AML) cell lines.

It is found in the nucleus. Potential transcription factor. May play a role in early mesoderm formation and later in lateral mesoderm differentiation and neurogenesis. In Homo sapiens (Human), this protein is LIM/homeobox protein Lhx1 (LHX1).